A 95-amino-acid chain; its full sequence is uncharacterized protein (95 aa).

This is an uncharacterized protein from Human adenovirus B serotype 7 (HAdV-7).